Consider the following 385-residue polypeptide: GDSL esterase/lipase 5 (385 aa).

The N-terminal stretch at 1–35 is a signal peptide; the sequence is MRESTLMEKVTRRTISSFIFFIVSSTILFLAGKSS. N45 is a glycosylation site (N-linked (GlcNAc...) asparagine). Catalysis depends on S55, which acts as the Nucleophile. N-linked (GlcNAc...) asparagine glycosylation is found at N66, N194, N211, and N289. Residues D345 and H348 contribute to the active site.

The protein belongs to the 'GDSL' lipolytic enzyme family.

It is found in the secreted. The polypeptide is GDSL esterase/lipase 5 (GLIP5) (Arabidopsis thaliana (Mouse-ear cress)).